We begin with the raw amino-acid sequence, 378 residues long: Probable endopolygalacturonase AFUB_016610 (378 aa).

The N-terminal stretch at 1–19 is a signal peptide; it reads MLKLMGSLVLLASAAEVIA. The propeptide occupies 20-35; it reads SPAAEPVAPSTTLEKR. An intrachain disulfide couples Cys-38 to Cys-56. 3 PbH1 repeats span residues 147-169, 170-200, and 201-222; these read TSSS…SING, CDGL…DIGS, and SSNI…AVNS. The active-site Proton donor is Asp-215. Cys-217 and Cys-233 are oxidised to a cystine. His-237 is a catalytic residue. PbH1 repeat units lie at residues 252 to 273 and 281 to 303; these read VENV…RIKA and IKGV…LIEQ. An N-linked (GlcNAc...) asparagine glycan is attached at Asn-254. A glycan (N-linked (GlcNAc...) asparagine) is linked at Asn-327. Cys-345 and Cys-350 are oxidised to a cystine. The N-linked (GlcNAc...) asparagine glycan is linked to Asn-352. Cys-369 and Cys-378 form a disulfide bridge.

Belongs to the glycosyl hydrolase 28 family.

The protein resides in the secreted. The enzyme catalyses (1,4-alpha-D-galacturonosyl)n+m + H2O = (1,4-alpha-D-galacturonosyl)n + (1,4-alpha-D-galacturonosyl)m.. Its function is as follows. Involved in maceration and soft-rotting of plant tissue. Hydrolyzes the 1,4-alpha glycosidic bonds of de-esterified pectate in the smooth region of the plant cell wall. This chain is Probable endopolygalacturonase AFUB_016610, found in Aspergillus fumigatus (strain CBS 144.89 / FGSC A1163 / CEA10) (Neosartorya fumigata).